Here is a 47-residue protein sequence, read N- to C-terminus: Small, acid-soluble spore protein N (47 aa).

Residues 1–47 (MSNPRGNPKYFNPNHLGTQPRAAGGNKGKKMQDQSGQHAQVIQTKGE) form a disordered region. The segment covering 33–47 (DQSGQHAQVIQTKGE) has biased composition (polar residues).

The protein belongs to the SspN family.

It is found in the spore core. In Geobacillus sp. (strain WCH70), this protein is Small, acid-soluble spore protein N.